Consider the following 173-residue polypeptide: MSIILGIDPGSRITGYGVVQQKGSKCIYIASGCIRTKGDTLAPKLDMIFNGISEIIKQYQPTEFGIEQVFMAKNPDSALKLGQARGAAIVAATQADLYVCEYSARQIKQAVSGSGGATKEQVQQMVMQILNLSGRPQADAADGLAVAICHAHTAQTIVAMSGKVSKTVRGRFR.

Active-site residues include D8, E67, and D139. Mg(2+) is bound by residues D8, E67, and D139.

This sequence belongs to the RuvC family. In terms of assembly, homodimer which binds Holliday junction (HJ) DNA. The HJ becomes 2-fold symmetrical on binding to RuvC with unstacked arms; it has a different conformation from HJ DNA in complex with RuvA. In the full resolvosome a probable DNA-RuvA(4)-RuvB(12)-RuvC(2) complex forms which resolves the HJ. Mg(2+) serves as cofactor.

It localises to the cytoplasm. It carries out the reaction Endonucleolytic cleavage at a junction such as a reciprocal single-stranded crossover between two homologous DNA duplexes (Holliday junction).. In terms of biological role, the RuvA-RuvB-RuvC complex processes Holliday junction (HJ) DNA during genetic recombination and DNA repair. Endonuclease that resolves HJ intermediates. Cleaves cruciform DNA by making single-stranded nicks across the HJ at symmetrical positions within the homologous arms, yielding a 5'-phosphate and a 3'-hydroxyl group; requires a central core of homology in the junction. The consensus cleavage sequence is 5'-(A/T)TT(C/G)-3'. Cleavage occurs on the 3'-side of the TT dinucleotide at the point of strand exchange. HJ branch migration catalyzed by RuvA-RuvB allows RuvC to scan DNA until it finds its consensus sequence, where it cleaves and resolves the cruciform DNA. The polypeptide is Crossover junction endodeoxyribonuclease RuvC (Psychromonas ingrahamii (strain DSM 17664 / CCUG 51855 / 37)).